The chain runs to 633 residues: ATP-dependent RNA helicase mrh4, mitochondrial (633 aa).

A mitochondrion-targeting transit peptide spans 1–38 (MNRLGRLSLPLRPQVCLLCQTQATMSSPLAGWQAVRSM). The interval 50 to 115 (MVLSSNVDKS…KQKPDSPLYK (66 aa)) is disordered. The segment covering 52-63 (LSSNVDKSSLKQ) has biased composition (polar residues). Positions 98 to 109 (RSGDSEDDKQKP) are enriched in basic and acidic residues. Residues 142–175 (SSFDQFPLLPVVRHSISSQALSRTGDIVPTPIQR) carry the Q motif motif. A Helicase ATP-binding domain is found at 195–407 (SDHEPNFEQY…RKRYPDIRRL (213 aa)). 208–215 (AETGSGKT) is an ATP binding site. The DEAD box motif lies at 354–357 (DEAD). The 176-residue stretch at 458–633 (FLAQAGPKVK…EGMFRGQALI (176 aa)) folds into the Helicase C-terminal domain.

Belongs to the DEAD box helicase family. MRH4 subfamily.

The protein resides in the mitochondrion. The enzyme catalyses ATP + H2O = ADP + phosphate + H(+). ATP-binding RNA helicase involved in mitochondrial RNA metabolism. Required for maintenance of mitochondrial DNA. In Aspergillus niger (strain ATCC MYA-4892 / CBS 513.88 / FGSC A1513), this protein is ATP-dependent RNA helicase mrh4, mitochondrial (mrh4).